Here is a 140-residue protein sequence, read N- to C-terminus: Large ribosomal subunit protein uL11 (140 aa).

This sequence belongs to the universal ribosomal protein uL11 family. In terms of assembly, part of the ribosomal stalk of the 50S ribosomal subunit. Interacts with L10 and the large rRNA to form the base of the stalk. L10 forms an elongated spine to which L12 dimers bind in a sequential fashion forming a multimeric L10(L12)X complex. One or more lysine residues are methylated.

In terms of biological role, forms part of the ribosomal stalk which helps the ribosome interact with GTP-bound translation factors. This chain is Large ribosomal subunit protein uL11, found in Staphylococcus aureus (strain Mu3 / ATCC 700698).